The sequence spans 74 residues: Putative membrane protein insertion efficiency factor (74 aa).

The protein belongs to the UPF0161 family.

It is found in the cell inner membrane. Could be involved in insertion of integral membrane proteins into the membrane. The polypeptide is Putative membrane protein insertion efficiency factor (Blochmanniella floridana).